The chain runs to 238 residues: uncharacterized protein (238 aa).

A Response regulatory domain is found at 3–116; that stretch reads RVIIVDDEQP…RLAKTLTRLS (114 aa). The residue at position 54 (D54) is a 4-aspartylphosphate. An HTH LytTR-type domain is found at 136–237; sequence IPCSGHNRIF…LKSLKEKLGI (102 aa).

This is an uncharacterized protein from Yersinia pestis.